The following is a 194-amino-acid chain: UPF0301 protein BT_0659 (194 aa).

It belongs to the UPF0301 (AlgH) family.

This chain is UPF0301 protein BT_0659, found in Bartonella tribocorum (strain CIP 105476 / IBS 506).